Reading from the N-terminus, the 317-residue chain is Aspartate carbamoyltransferase catalytic subunit (317 aa).

The carbamoyl phosphate site is built by arginine 66 and threonine 67. Residue lysine 94 coordinates L-aspartate. Carbamoyl phosphate contacts are provided by arginine 116, histidine 144, and glutamine 147. L-aspartate-binding residues include arginine 177 and arginine 231. Glycine 272 and proline 273 together coordinate carbamoyl phosphate.

This sequence belongs to the aspartate/ornithine carbamoyltransferase superfamily. ATCase family. Heterododecamer (2C3:3R2) of six catalytic PyrB chains organized as two trimers (C3), and six regulatory PyrI chains organized as three dimers (R2).

It catalyses the reaction carbamoyl phosphate + L-aspartate = N-carbamoyl-L-aspartate + phosphate + H(+). It functions in the pathway pyrimidine metabolism; UMP biosynthesis via de novo pathway; (S)-dihydroorotate from bicarbonate: step 2/3. Catalyzes the condensation of carbamoyl phosphate and aspartate to form carbamoyl aspartate and inorganic phosphate, the committed step in the de novo pyrimidine nucleotide biosynthesis pathway. This is Aspartate carbamoyltransferase catalytic subunit from Rhodopseudomonas palustris (strain BisB18).